The chain runs to 205 residues: High frequency lysogenization protein HflD homolog (205 aa).

The protein belongs to the HflD family.

The protein resides in the cytoplasm. The protein localises to the cell inner membrane. The chain is High frequency lysogenization protein HflD homolog from Haemophilus influenzae (strain 86-028NP).